Reading from the N-terminus, the 331-residue chain is Protein-methionine-sulfoxide reductase catalytic subunit MsrP (331 aa).

Positions Met-1–Ala-57 form a signal peptide, tat-type signal. Residues Asn-90, Tyr-93–Glu-94, Cys-148, Thr-183, Asn-231, Arg-236, and Ser-247–Lys-249 contribute to the Mo-molybdopterin site.

This sequence belongs to the MsrP family. As to quaternary structure, heterodimer of a catalytic subunit (MsrP) and a heme-binding subunit (MsrQ). Mo-molybdopterin serves as cofactor. Predicted to be exported by the Tat system. The position of the signal peptide cleavage has not been experimentally proven.

It localises to the periplasm. The catalysed reaction is L-methionyl-[protein] + a quinone + H2O = L-methionyl-(S)-S-oxide-[protein] + a quinol. The enzyme catalyses L-methionyl-[protein] + a quinone + H2O = L-methionyl-(R)-S-oxide-[protein] + a quinol. In terms of biological role, part of the MsrPQ system that repairs oxidized periplasmic proteins containing methionine sulfoxide residues (Met-O), using respiratory chain electrons. Thus protects these proteins from oxidative-stress damage caused by reactive species of oxygen and chlorine generated by the host defense mechanisms. MsrPQ is essential for the maintenance of envelope integrity under bleach stress, rescuing a wide series of structurally unrelated periplasmic proteins from methionine oxidation. The catalytic subunit MsrP is non-stereospecific, being able to reduce both (R-) and (S-) diastereoisomers of methionine sulfoxide. The sequence is that of Protein-methionine-sulfoxide reductase catalytic subunit MsrP from Burkholderia mallei (strain ATCC 23344).